The primary structure comprises 73 residues: Small proline-rich protein 2G (73 aa).

Positions 1–11 (MSYQQQQCKQP) are enriched in low complexity. A disordered region spans residues 1-20 (MSYQQQQCKQPCQPPPVCPT). A run of 3 repeats spans residues 21-29 (PKCPEPCPP), 30-38 (PKCPEPYLP), and 39-47 (PPCPPEHCP). Residues 21-47 (PKCPEPCPPPKCPEPYLPPPCPPEHCP) are 3 X 9 AA approximate tandem repeats.

This sequence belongs to the cornifin (SPRR) family.

It is found in the cytoplasm. In terms of biological role, cross-linked envelope protein of keratinocytes. It is a keratinocyte protein that first appears in the cell cytosol, but ultimately becomes cross-linked to membrane proteins by transglutaminase. All that results in the formation of an insoluble envelope beneath the plasma membrane. The protein is Small proline-rich protein 2G (SPRR2G) of Homo sapiens (Human).